A 141-amino-acid polypeptide reads, in one-letter code: Galactose-6-phosphate isomerase subunit LacA 1 (141 aa).

Belongs to the LacAB/RpiB family. As to quaternary structure, heteromultimeric protein consisting of LacA and LacB.

The enzyme catalyses aldehydo-D-galactose 6-phosphate = keto-D-tagatose 6-phosphate. Its pathway is carbohydrate metabolism; D-galactose 6-phosphate degradation; D-tagatose 6-phosphate from D-galactose 6-phosphate: step 1/1. The polypeptide is Galactose-6-phosphate isomerase subunit LacA 1 (Streptococcus pyogenes serotype M1).